We begin with the raw amino-acid sequence, 116 residues long: Diuretic hormone class 2 (116 aa).

Positions 1–25 (MTNRCACFALAFLLFCLLAISSIEA) are cleaved as a signal peptide. Positions 26-75 (APMPSQSNGGYGGAGYNELEEVPDDLLMELMTRFGRTIIRARNDLENSKR) are excised as a propeptide. P106 bears the Proline amide mark. A propeptide spanning residues 112-116 (SETDV) is cleaved from the precursor.

It is found in the secreted. Regulation of fluid secretion. Stimulates Malpighian tubules fluid secretion by activating the apical membrane V-ATPase via cyclic AMP of principal cells in the main secretory segment. The sequence is that of Diuretic hormone class 2 (Dh31) from Drosophila melanogaster (Fruit fly).